A 583-amino-acid chain; its full sequence is Long-chain-fatty-acid--AMP ligase FadD26 (583 aa).

Belongs to the ATP-dependent AMP-binding enzyme family.

It carries out the reaction holo-[(phenol)carboxyphthiodiolenone synthase] + a long-chain fatty acid + ATP = a long-chain fatty acyl-[(phenol)carboxyphthiodiolenone synthase] + AMP + diphosphate. The catalysed reaction is eicosanoate + holo-[(phenol)carboxyphthiodiolenone synthase] + ATP = icosanoyl-[(phenol)carboxyphthiodiolenone synthase] + AMP + diphosphate. The enzyme catalyses holo-[(phenol)carboxyphthiodiolenone synthase] + docosanoate + ATP = docosanoyl-[(phenol)carboxyphthiodiolenone synthase] + AMP + diphosphate. The protein operates within lipid metabolism; fatty acid biosynthesis. Its function is as follows. Catalyzes the activation of long-chain fatty acids as acyl-adenylates (acyl-AMP), which are then transferred to the multifunctional polyketide synthase PpsA for further chain extension. Catalyzes the adenylation of the long-chain fatty acids eicosanoate (C20) or docosanoate (C22), and potentially the very-long-chain fatty acid lignocerate (C24). Involved in the biosynthesis of phthiocerol dimycocerosate (DIM A) and phthiodiolone dimycocerosate (DIM B). The chain is Long-chain-fatty-acid--AMP ligase FadD26 (fadD26) from Mycobacterium bovis (strain ATCC BAA-935 / AF2122/97).